A 532-amino-acid chain; its full sequence is Calnexin homolog 2 (532 aa).

An N-terminal signal peptide occupies residues 1–25; it reads MRERIITFVSLLLVALLSFPSVSYC. Over 26-468 the chain is Lumenal; sequence DDQTILYESF…EKAETQPNLT (443 aa). Ser-34 and Asp-65 together coordinate Ca(2+). Cys-110 and Cys-145 form a disulfide bridge. The an alpha-D-glucoside site is built by Tyr-114, Lys-116, Tyr-136, and Asp-143. A disordered region spans residues 208–302; it reads NLLSAEDFEP…DEEDGEWEAP (95 aa). Residues 225 to 358 form a p domain (Extended arm) region; the sequence is IPDPEDKKPE…RDIPNPDYFE (134 aa). Positions 226–242 are enriched in basic and acidic residues; that stretch reads PDPEDKKPEDWDERAKI. A run of 5 repeats spans residues 227–238, 244–255, 263–274, 282–293, and 297–307. 4 X approximate repeats regions lie at residues 227 to 293 and 297 to 354; these read DPED…DWDD and GEWE…IPNP. Acidic residues-rich tracts occupy residues 252 to 283 and 290 to 299; these read DWDE…VEDP and DWDDEEDGEW. A disulfide bond links Cys-309 and Cys-315. Tandem repeats lie at residues 316 to 326, 330 to 340, and 344 to 354. Glu-373 contacts an alpha-D-glucoside. Ca(2+) is bound at residue Asp-384. Asn-466 is a glycosylation site (N-linked (GlcNAc...) asparagine). The helical transmembrane segment at 469–489 threads the bilayer; it reads IGVLISIVIVFLSLFFKLIFG. Over 490–532 the chain is Cytoplasmic; the sequence is GAKAKVEKKKPETAAETSTSEAKTEEKAEAVAAPRKRQTRRES. The interval 493–532 is disordered; the sequence is AKVEKKKPETAAETSTSEAKTEEKAEAVAAPRKRQTRRES. A compositionally biased stretch (basic residues) spans 523 to 532; the sequence is PRKRQTRRES.

This sequence belongs to the calreticulin family.

The protein resides in the endoplasmic reticulum membrane. Its function is as follows. Calcium-binding protein that interacts with newly synthesized monoglucosylated glycoproteins in the endoplasmic reticulum. It may act in assisting protein assembly and/or in the retention within the ER of unassembled protein subunits. It seems to play a major role in the quality control apparatus of the ER by the retention of incorrectly folded proteins. The chain is Calnexin homolog 2 from Arabidopsis thaliana (Mouse-ear cress).